The chain runs to 572 residues: Transducin-like enhancer protein 6 (572 aa).

Disordered stretches follow at residues 1 to 30 (MTSR…SSPT), 92 to 121 (QSEE…SSFE), and 174 to 236 (KAKP…VQEP). The segment covering 14-30 (KSTSPCPGISNSESSPT) has biased composition (polar residues). 7 WD repeats span residues 284 to 322 (AHGE…AEDR), 332 to 372 (TPGA…LHVK), 377 to 416 (CAGL…VVRD), 419 to 456 (GYPD…KPLE), 458 to 497 (QFKS…RHMV), 499 to 538 (QKDS…KVFE), and 540 to 571 (PEMS…YQIT). At serine 510 the chain carries Phosphoserine; by PKA.

It belongs to the WD repeat Groucho/TLE family. Homodimers. Component of the subcortical maternal complex (SCMC), at least composed of NLRP5, KHDC3, OOEP, and TLE6. Within the complex, interacts with NLRP5, KHDC3 and OOEP. The SCMC may facilitate translocation of its components between the nuclear and cytoplasmic compartments. As part of the SCMC interacts with the SCMC-associated protein ZBED3. As part of the SCMC interacts with the SCMC-associated protein NLRP4F. As part of the SCMC interacts with the SCMC-associated protein CFL1/Cofilin-1. Interacts with FOXG1/BF-1; the interaction inhibits TLE1 interaction with FOXG1/BF-1. Interacts with NFATC1. Interacts with PAX6. In terms of assembly, component of the subcortical maternal complex (SCMC), at least composed of NLRP5, KHDC3L, OOEP, and TLE6 isoform 1. Within the complex, interacts with NLRP5, KHDC3L and OOEP. The SCMC may facilitate translocation of its components between the nuclear and cytoplasmic compartments.

The protein localises to the cytoplasm. It localises to the nucleus. Component of the subcortical maternal complex (SCMC), a multiprotein complex that plays a key role in early embryonic development. The SCMC complex is a structural constituent of cytoplasmic lattices, which consist in fibrous structures found in the cytoplasm of oocytes and preimplantation embryos. They are required to store maternal proteins critical for embryonic development, such as proteins that control epigenetic reprogramming of the preimplantation embryo, and prevent their degradation or activation. Also required for spermatogenesis: regulates spermatogonia proliferation and cell cycle progression, potentially via regulation of cell cycle regulatory genes such as; CEBPB, CEBPA, CSF3, PCNA, and CDK4. Suppresses FOXG1/BF-1-mediated transcriptional repression by inhibiting interaction of the transcriptional corepressor TLE1 with FOXG1 which promotes cortical neuron differentiation. Acts as a transcriptional corepressor of NFATC1-mediated gene expression by contributing to PAX6-mediated repression. Functionally, component of the subcortical maternal complex (SCMC), a multiprotein complex that plays a key role in early embryonic development. The protein is Transducin-like enhancer protein 6 of Homo sapiens (Human).